The chain runs to 187 residues: dCTP deaminase (187 aa).

DCTP is bound by residues 107–112, 131–133, glutamine 152, tyrosine 166, lysine 175, and glutamine 176; these read KSTYAR and TLE. Glutamate 133 acts as the Proton donor/acceptor in catalysis.

Belongs to the dCTP deaminase family. As to quaternary structure, homotrimer.

It catalyses the reaction dCTP + H2O + H(+) = dUTP + NH4(+). It functions in the pathway pyrimidine metabolism; dUMP biosynthesis; dUMP from dCTP (dUTP route): step 1/2. Catalyzes the deamination of dCTP to dUTP. This Ehrlichia canis (strain Jake) protein is dCTP deaminase.